Reading from the N-terminus, the 466-residue chain is Methylenetetrahydrofolate--tRNA-(uracil-5-)-methyltransferase TrmFO (466 aa).

14-19 (GGGLAG) serves as a coordination point for FAD.

This sequence belongs to the MnmG family. TrmFO subfamily. Requires FAD as cofactor.

It is found in the cytoplasm. The enzyme catalyses uridine(54) in tRNA + (6R)-5,10-methylene-5,6,7,8-tetrahydrofolate + NADH + H(+) = 5-methyluridine(54) in tRNA + (6S)-5,6,7,8-tetrahydrofolate + NAD(+). It catalyses the reaction uridine(54) in tRNA + (6R)-5,10-methylene-5,6,7,8-tetrahydrofolate + NADPH + H(+) = 5-methyluridine(54) in tRNA + (6S)-5,6,7,8-tetrahydrofolate + NADP(+). In terms of biological role, catalyzes the folate-dependent formation of 5-methyl-uridine at position 54 (M-5-U54) in all tRNAs. This Brucella canis (strain ATCC 23365 / NCTC 10854 / RM-666) protein is Methylenetetrahydrofolate--tRNA-(uracil-5-)-methyltransferase TrmFO.